The sequence spans 155 residues: MQLNLVCVGERMPSWVNEGYEEYARRLPRECALMLREIAPGKRTRNCDIQRILADEGQRMLAAVGGNAHIVTLDVGGKDWSTRELAEVLARWLREGRDIALLVGGPDGLSDACRQRAAESWSLSRMTFPHPLVRVIVAEQLYRAWTLLNNHPYHR.

S-adenosyl-L-methionine-binding positions include leucine 73, glycine 104, and 123–128 (LSRMTF).

It belongs to the RNA methyltransferase RlmH family. Homodimer.

The protein resides in the cytoplasm. The catalysed reaction is pseudouridine(1915) in 23S rRNA + S-adenosyl-L-methionine = N(3)-methylpseudouridine(1915) in 23S rRNA + S-adenosyl-L-homocysteine + H(+). Specifically methylates the pseudouridine at position 1915 (m3Psi1915) in 23S rRNA. This Methylococcus capsulatus (strain ATCC 33009 / NCIMB 11132 / Bath) protein is Ribosomal RNA large subunit methyltransferase H.